Consider the following 171-residue polypeptide: Probable chorismate pyruvate-lyase (171 aa).

Substrate contacts are provided by M36, R78, L116, and E157.

This sequence belongs to the UbiC family.

Its subcellular location is the cytoplasm. The enzyme catalyses chorismate = 4-hydroxybenzoate + pyruvate. The protein operates within cofactor biosynthesis; ubiquinone biosynthesis. Removes the pyruvyl group from chorismate, with concomitant aromatization of the ring, to provide 4-hydroxybenzoate (4HB) for the ubiquinone pathway. The sequence is that of Probable chorismate pyruvate-lyase from Bartonella bacilliformis (strain ATCC 35685 / KC583 / Herrer 020/F12,63).